A 421-amino-acid chain; its full sequence is Histidine--tRNA ligase (421 aa).

This sequence belongs to the class-II aminoacyl-tRNA synthetase family. In terms of assembly, homodimer.

Its subcellular location is the cytoplasm. The enzyme catalyses tRNA(His) + L-histidine + ATP = L-histidyl-tRNA(His) + AMP + diphosphate + H(+). The protein is Histidine--tRNA ligase of Coxiella burnetii (strain CbuG_Q212) (Coxiella burnetii (strain Q212)).